The chain runs to 502 residues: Bone morphogenetic protein receptor type-1B (502 aa).

Residues 1–13 (MLLRSAGKLNVGT) form the signal peptide. Residues 1–25 (MLLRSAGKLNVGTKKEDGESTAPTP) are disordered. Residues 14 to 126 (KKEDGESTAP…DFVDGPIHHR (113 aa)) are Extracellular-facing. Cystine bridges form between Cys32–Cys53, Cys34–Cys38, Cys47–Cys71, Cys81–Cys95, and Cys96–Cys102. The helical transmembrane segment at 127-148 (ALLISVTVCSLLLVLIILFCYF) threads the bilayer. Residues 149-502 (RYKRQETRPR…KMSESQDIKL (354 aa)) lie on the Cytoplasmic side of the membrane. Residues 174-203 (ESLRDLIEQSQSSGSGSGLPLLVQRTIAKQ) enclose the GS domain. A Protein kinase domain is found at 204–494 (IQMVKQIGKG…LRVKKTLAKM (291 aa)). ATP is bound by residues 210 to 218 (IGKGRYGEV) and Lys231. Asp332 serves as the catalytic Proton acceptor.

Belongs to the protein kinase superfamily. TKL Ser/Thr protein kinase family. TGFB receptor subfamily. Interacts with high affinity with GDF5; positively regulates chondrocyte differentiation. Interacts with SCUBE3. Interacts with TSC22D1/TSC-22. Interacts with TGFBR3. It depends on Mg(2+) as a cofactor. Mn(2+) is required as a cofactor. Autophosphorylated.

Its subcellular location is the cell membrane. The catalysed reaction is L-threonyl-[receptor-protein] + ATP = O-phospho-L-threonyl-[receptor-protein] + ADP + H(+). It carries out the reaction L-seryl-[receptor-protein] + ATP = O-phospho-L-seryl-[receptor-protein] + ADP + H(+). In terms of biological role, on ligand binding, forms a receptor complex consisting of two type II and two type I transmembrane serine/threonine kinases. Type II receptors phosphorylate and activate type I receptors which autophosphorylate, then bind and activate SMAD transcriptional regulators. Receptor for BMP7/OP-1 and GDF5. Positively regulates chondrocyte differentiation through GDF5 interaction. The protein is Bone morphogenetic protein receptor type-1B (BMPR1B) of Homo sapiens (Human).